The sequence spans 311 residues: JNK1/MAPK8-associated membrane protein (311 aa).

Over 1 to 57 (MAVDIQPACLGLYCGKTLLFKNGSSEIYGECGVCPRGQRTNAQKYCQPCTESPELYD) the chain is Lumenal. The N-linked (GlcNAc...) asparagine glycan is linked to N22. Residues 58-78 (WLYLGFMAMLPLVLHWFFIEW) traverse the membrane as a helical segment. Over 79–87 (YSGKKSSSA) the chain is Cytoplasmic. The chain crosses the membrane as a helical span at residues 88-108 (LFQHITALFECTMAAIITLLV). The Lumenal segment spans residues 109–149 (SDPVGVLYIRSCRVLMLSDWYTMLYNPSPDYVTTVHCTHEA). Residues 150–170 (VYPLYTIVFVYYAFCLVLMML) form a helical membrane-spanning segment. Residues 171–188 (LRPLLVKKIACGLGKSDR) are Cytoplasmic-facing. A helical membrane pass occupies residues 189-209 (FKSIYAALYFFPILTVLQAVG). Residue G210 is a topological domain, lumenal. The helical transmembrane segment at 211–231 (GLLYYAFPYIILVLSLVTLAV) threads the bilayer. Over 232–250 (YMSASEIENCYDLLVRKKR) the chain is Cytoplasmic. A helical membrane pass occupies residues 251 to 271 (LIVLFSHWLLHAYGIVSISRV). The Lumenal portion of the chain corresponds to 272 to 277 (DRLEHD). Residues 278 to 298 (LPLLALVPTPALFYLFTAKFT) traverse the membrane as a helical segment. Over 299 to 311 (EPSRILSEGANGH) the chain is Cytoplasmic.

As to quaternary structure, interacts with RNF5 and MAPK8, but not with MAPK9. Binding to MAPK8 occurs before and after exposure to stress, such as UV irradiation. After exposure to stress, interacts with phosphorylated MAPK8. Competes with DUSP10 for MAPK8 binding. Associates with multiple components of the proteasome and with ERAD regulatory proteins, including AMFR/GP78, CANX, PSMC1, PSMC2, PSMC3/TBP1, PSMC5, PSMC6, PSMD8, SEC61-ALPHA and UFD1. In terms of processing, ubiquitinated by RNF5 via 'Lys-63'-linked ubiquitin linkage in a UBE2N-dependent manner. Ubiquitination decreases association with components of the proteasome and ERAD. In terms of tissue distribution, expressed in numerous tissues, including brain, spleen, thymus, liver, kidney and testis.

Its subcellular location is the endoplasmic reticulum membrane. In terms of biological role, regulates the duration of MAPK8 activity in response to various stress stimuli. Facilitates degradation of misfolded endoplasmic reticulum (ER) proteins through the recruitment of components of the proteasome and endoplasmic reticulum-associated degradation (ERAD) system. The polypeptide is JNK1/MAPK8-associated membrane protein (Jkamp) (Mus musculus (Mouse)).